The primary structure comprises 297 residues: 4-hydroxy-tetrahydrodipicolinate synthase (297 aa).

T46 is a pyruvate binding site. The Proton donor/acceptor role is filled by Y136. The active-site Schiff-base intermediate with substrate is K165. Residue T206 coordinates pyruvate.

This sequence belongs to the DapA family. As to quaternary structure, homotetramer; dimer of dimers.

The protein localises to the cytoplasm. The catalysed reaction is L-aspartate 4-semialdehyde + pyruvate = (2S,4S)-4-hydroxy-2,3,4,5-tetrahydrodipicolinate + H2O + H(+). The protein operates within amino-acid biosynthesis; L-lysine biosynthesis via DAP pathway; (S)-tetrahydrodipicolinate from L-aspartate: step 3/4. Functionally, catalyzes the condensation of (S)-aspartate-beta-semialdehyde [(S)-ASA] and pyruvate to 4-hydroxy-tetrahydrodipicolinate (HTPA). The polypeptide is 4-hydroxy-tetrahydrodipicolinate synthase (Sulfurimonas denitrificans (strain ATCC 33889 / DSM 1251) (Thiomicrospira denitrificans (strain ATCC 33889 / DSM 1251))).